The following is a 342-amino-acid chain: S-adenosylmethionine:tRNA ribosyltransferase-isomerase (342 aa).

The protein belongs to the QueA family. As to quaternary structure, monomer.

The protein localises to the cytoplasm. It catalyses the reaction 7-aminomethyl-7-carbaguanosine(34) in tRNA + S-adenosyl-L-methionine = epoxyqueuosine(34) in tRNA + adenine + L-methionine + 2 H(+). It participates in tRNA modification; tRNA-queuosine biosynthesis. Its function is as follows. Transfers and isomerizes the ribose moiety from AdoMet to the 7-aminomethyl group of 7-deazaguanine (preQ1-tRNA) to give epoxyqueuosine (oQ-tRNA). This Streptococcus mutans serotype c (strain ATCC 700610 / UA159) protein is S-adenosylmethionine:tRNA ribosyltransferase-isomerase.